Here is a 415-residue protein sequence, read N- to C-terminus: Histone acetyltransferase type B subunit 2 (415 aa).

WD repeat units follow at residues glutamate 118–isoleucine 158, proline 163–leucine 203, threonine 211–serine 251, proline 256–alanine 296, and glycine 307–alanine 347. The interaction with the histone H4 N-terminus stretch occupies residues glutamate 349–aspartate 353. Residues glycine 364 to glutamate 404 form a WD 6 repeat.

Belongs to the WD repeat RBAP46/RBAP48/MSI1 family. Component of the HAT-B complex composed of at least HAT1 and HAT2. The HAT-B complex binds to histone H4 tail.

It localises to the cytoplasm. It is found in the nucleus. In terms of biological role, regulatory subunit of the histone acetylase B (HAT-B) complex. The complex acetylates 'Lys-12' of histone H4 which is required for telomeric silencing. This Debaryomyces hansenii (strain ATCC 36239 / CBS 767 / BCRC 21394 / JCM 1990 / NBRC 0083 / IGC 2968) (Yeast) protein is Histone acetyltransferase type B subunit 2 (HAT2).